Reading from the N-terminus, the 79-residue chain is Acyl carrier protein (79 aa).

The region spanning 2-77 (ENIEQRVKKI…QAIDYVTAHL (76 aa)) is the Carrier domain. S37 bears the O-(pantetheine 4'-phosphoryl)serine mark.

It belongs to the acyl carrier protein (ACP) family. Post-translationally, 4'-phosphopantetheine is transferred from CoA to a specific serine of apo-ACP by AcpS. This modification is essential for activity because fatty acids are bound in thioester linkage to the sulfhydryl of the prosthetic group.

Its subcellular location is the cytoplasm. The protein operates within lipid metabolism; fatty acid biosynthesis. Carrier of the growing fatty acid chain in fatty acid biosynthesis. This chain is Acyl carrier protein, found in Aromatoleum aromaticum (strain DSM 19018 / LMG 30748 / EbN1) (Azoarcus sp. (strain EbN1)).